Consider the following 24-residue polypeptide: Hemocyanin subunit 4e (24 aa).

It belongs to the tyrosinase family. Hemocyanin subfamily. Hemolymph.

It localises to the secreted. Its subcellular location is the extracellular space. Hemocyanins are copper-containing oxygen carriers occurring freely dissolved in the hemolymph of many mollusks and arthropods. The polypeptide is Hemocyanin subunit 4e (Maja squinado (Mediterranean spider crab)).